The primary structure comprises 383 residues: Probable 2-succinylbenzoate--CoA ligase (383 aa).

This sequence belongs to the ATP-dependent AMP-binding enzyme family. MenE subfamily.

The enzyme catalyses 2-succinylbenzoate + ATP + CoA = 2-succinylbenzoyl-CoA + AMP + diphosphate. It participates in quinol/quinone metabolism; 1,4-dihydroxy-2-naphthoate biosynthesis; 1,4-dihydroxy-2-naphthoate from chorismate: step 5/7. It functions in the pathway quinol/quinone metabolism; menaquinone biosynthesis. Converts 2-succinylbenzoate (OSB) to 2-succinylbenzoyl-CoA (OSB-CoA). May be involved in the biosynthesis of menaquinone. The protein is Probable 2-succinylbenzoate--CoA ligase (menE) of Mycobacterium tuberculosis (strain CDC 1551 / Oshkosh).